A 672-amino-acid polypeptide reads, in one-letter code: Transmembrane 9 superfamily member 2 (672 aa).

The first 18 residues, Met-1 to Gly-18, serve as a signal peptide directing secretion. Over Phe-19–Gln-307 the chain is Extracellular. The helical transmembrane segment at Ile-308 to Met-328 threads the bilayer. At His-329–Gln-383 the chain is on the cytoplasmic side. The chain crosses the membrane as a helical span at residues Leu-384–Ser-404. At Arg-405–Thr-410 the chain is on the extracellular side. The helical transmembrane segment at Val-411–Tyr-431 threads the bilayer. Residues Lys-432–Pro-447 lie on the Cytoplasmic side of the membrane. A helical transmembrane segment spans residues Ile-448 to Ala-468. Over His-469 to Leu-479 the chain is Extracellular. A helical transmembrane segment spans residues Phe-480 to Val-500. Topologically, residues Ala-501–Gln-532 are cytoplasmic. Residues Ala-533–Tyr-553 form a helical membrane-spanning segment. Topologically, residues Ser-554–Phe-565 are extracellular. Residues Gly-566–Ile-586 form a helical membrane-spanning segment. At Thr-587–Arg-601 the chain is on the cytoplasmic side. The helical transmembrane segment at Ser-602–Thr-622 threads the bilayer. Residues Lys-623 to Gly-628 are Extracellular-facing. A helical membrane pass occupies residues Val-629–Val-649. Residues Thr-650–Glu-672 are Cytoplasmic-facing.

Belongs to the nonaspanin (TM9SF) (TC 9.A.2) family.

It is found in the vacuole membrane. In terms of biological role, with EMP70 and TMN3, plays a critical role in the late stages of a nutrient-controlled pathway notably regulating FLO11 gene expression. Acts downstream of RAS2 and TOR. Essential for cell adhesion and filamentous growth. May play a role as effector of cellular copper homeostasis. The protein is Transmembrane 9 superfamily member 2 (TMN2) of Saccharomyces cerevisiae (strain ATCC 204508 / S288c) (Baker's yeast).